We begin with the raw amino-acid sequence, 512 residues long: Probable pectinesterase/pectinesterase inhibitor 54 (512 aa).

The signal sequence occupies residues 1 to 24 (MGVIDMVLFWVLLVNALLIVDASS). Residues 29–193 (FAYQNEMQRH…SRLVSNSLTL (165 aa)) form a pectinesterase inhibitor 54 region. N-linked (GlcNAc...) asparagine glycosylation is found at Asn-71 and Asn-131. Positions 229-496 (HVVVAKDGSG…FSVVKRRNGE (268 aa)) are pectinesterase 54. Gln-302 is a binding site for substrate. Asp-325 (proton donor; for pectinesterase activity) is an active-site residue. Cysteines 339 and 359 form a disulfide. Asp-346 serves as the catalytic Nucleophile; for pectinesterase activity. Residues Arg-415 and Trp-417 each contribute to the substrate site.

The protein in the N-terminal section; belongs to the PMEI family. In the C-terminal section; belongs to the pectinesterase family. In terms of tissue distribution, expressed in siliques.

Its subcellular location is the secreted. It localises to the cell wall. The enzyme catalyses [(1-&gt;4)-alpha-D-galacturonosyl methyl ester](n) + n H2O = [(1-&gt;4)-alpha-D-galacturonosyl](n) + n methanol + n H(+). Its pathway is glycan metabolism; pectin degradation; 2-dehydro-3-deoxy-D-gluconate from pectin: step 1/5. Functionally, acts in the modification of cell walls via demethylesterification of cell wall pectin. In Arabidopsis thaliana (Mouse-ear cress), this protein is Probable pectinesterase/pectinesterase inhibitor 54 (PME54).